The sequence spans 277 residues: Omega-amidase NIT2 (277 aa).

The CN hydrolase domain maps to 4–248 (FRLAVVQLHV…ESVVYADIDL (245 aa)). The active-site Proton acceptor is the Glu43. Residue Lys112 is the Proton donor of the active site. Cys153 serves as the catalytic Nucleophile.

The protein belongs to the carbon-nitrogen hydrolase superfamily. NIT1/NIT2 family. In terms of assembly, homodimer.

The protein resides in the cytoplasm. It catalyses the reaction 2-oxoglutaramate + H2O = 2-oxoglutarate + NH4(+). The enzyme catalyses 2-oxosuccinamate + H2O = oxaloacetate + NH4(+). Has omega-amidase activity. The role of omega-amidase is to remove potentially toxic intermediates by converting 2-oxoglutaramate and 2-oxosuccinamate to biologically useful 2-oxoglutarate and oxaloacetate, respectively. In Danio rerio (Zebrafish), this protein is Omega-amidase NIT2 (nit2).